Consider the following 447-residue polypeptide: Probable glycine dehydrogenase (decarboxylating) subunit 1 (447 aa).

This sequence belongs to the GcvP family. N-terminal subunit subfamily. As to quaternary structure, the glycine cleavage system is composed of four proteins: P, T, L and H. In this organism, the P 'protein' is a heterodimer of two subunits.

The enzyme catalyses N(6)-[(R)-lipoyl]-L-lysyl-[glycine-cleavage complex H protein] + glycine + H(+) = N(6)-[(R)-S(8)-aminomethyldihydrolipoyl]-L-lysyl-[glycine-cleavage complex H protein] + CO2. Its function is as follows. The glycine cleavage system catalyzes the degradation of glycine. The P protein binds the alpha-amino group of glycine through its pyridoxal phosphate cofactor; CO(2) is released and the remaining methylamine moiety is then transferred to the lipoamide cofactor of the H protein. In Azorhizobium caulinodans (strain ATCC 43989 / DSM 5975 / JCM 20966 / LMG 6465 / NBRC 14845 / NCIMB 13405 / ORS 571), this protein is Probable glycine dehydrogenase (decarboxylating) subunit 1.